We begin with the raw amino-acid sequence, 93 residues long: U12-lycotoxin-Ls1d (93 aa).

Positions 1–18 are cleaved as a signal peptide; it reads MKFAVILLFSLVVLAVAS. Residues 19–38 constitute a propeptide that is removed on maturation; the sequence is ESVEEVRREIDIEDLPEQQR.

Belongs to the neurotoxin 31 family. Contains 5 disulfide bonds. Expressed by the venom gland.

The protein resides in the secreted. The polypeptide is U12-lycotoxin-Ls1d (Lycosa singoriensis (Wolf spider)).